The following is a 162-amino-acid chain: Putative 4-hydroxy-4-methyl-2-oxoglutarate aldolase (162 aa).

Substrate-binding positions include 75-78 (GDML) and Arg-97. Asp-98 is an a divalent metal cation binding site.

Belongs to the class II aldolase/RraA-like family. Homotrimer. A divalent metal cation serves as cofactor.

It catalyses the reaction 4-hydroxy-4-methyl-2-oxoglutarate = 2 pyruvate. The catalysed reaction is oxaloacetate + H(+) = pyruvate + CO2. In terms of biological role, catalyzes the aldol cleavage of 4-hydroxy-4-methyl-2-oxoglutarate (HMG) into 2 molecules of pyruvate. Also contains a secondary oxaloacetate (OAA) decarboxylase activity due to the common pyruvate enolate transition state formed following C-C bond cleavage in the retro-aldol and decarboxylation reactions. This is Putative 4-hydroxy-4-methyl-2-oxoglutarate aldolase from Pseudomonas syringae pv. tomato (strain ATCC BAA-871 / DC3000).